Reading from the N-terminus, the 94-residue chain is RING finger protein Z (94 aa).

Positions 1–19 (MGNCNGASKSNQPDSSRVT) are enriched in polar residues. Residues 1-20 (MGNCNGASKSNQPDSSRVTQ) are disordered. Gly2 carries N-myristoyl glycine; by host lipidation. An RING-type; atypical zinc finger spans residues 39-75 (CKCCWFADTNLITCNDHYLCLRCHQVMLRNSDLCNIC). Positions 89–92 (PTAP) match the PTAP/PSAP motif motif.

This sequence belongs to the arenaviridae Z protein family. As to quaternary structure, interacts with protein NP; this interaction probably directs the encapsidated genome to budding sites. Interacts (via RING domain) with polymerase L; this interaction inhibits viral transcription and replication, Z partially blocks the product exit tunnel for the releasing nascent RNA product. Interacts with the glycoprotein complex; this interaction plays a role in virion budding. Interacts with host eIF4E; this interaction results in eIF4E reduced affinity for its substrate, the 5'-m7 G cap structure. Interacts (via late-budding domain) with host TSG101; this interaction is essential for budding and release of viral particles. Interacts with host RPLP0; this interaction may serve to load ribosome-like particles inside the virion. Interacts with host PML; this interaction induces PML bodies redistribution in the cytoplasm upon viral infection. In terms of processing, myristoylation is required for the role of RING finger protein Z in assembly and budding.

It is found in the virion. Its subcellular location is the host cytoplasm. The protein resides in the host perinuclear region. The protein localises to the host cell membrane. Plays a crucial role in virion assembly and budding. Expressed late in the virus life cycle, it acts as an inhibitor of viral transcription and RNA synthesis by interacting with the viral polymerase L. Presumably recruits the NP encapsidated genome to cellular membranes at budding sites via direct interaction with NP. Plays critical roles in the final steps of viral release by interacting with host TSG101, a member of the vacuolar protein-sorting pathway and using other cellular host proteins involved in vesicle formation pathway. The budding of the virus progeny occurs after association of protein Z with the viral glycoprotein complex SSP-GP1-GP2 at the cell periphery, step that requires myristoylation of protein Z. Also selectively represses protein production by associating with host eIF4E. In cell-based minigenome assay, has an inhibitory effect on the ribonucleoprotein machinery (vRNP), which is responsible for the replication and transcription of the viral genome. The chain is RING finger protein Z from Akodon azarae (Azara's grass mouse).